Reading from the N-terminus, the 957-residue chain is SH3 domain-binding protein 4-A (957 aa).

Residues Glu-54–Tyr-113 enclose the SH3 1 domain. The ZU5 domain occupies Thr-312–Val-449. In terms of domain architecture, SH3 2 spans Thr-649–Lys-719.

As to quaternary structure, homodimer or homooligomer.

The protein localises to the membrane. Its subcellular location is the clathrin-coated pit. The protein resides in the cytoplasmic vesicle. It localises to the clathrin-coated vesicle. It is found in the nucleus. In terms of biological role, possible role in regulating endocytosis of the transferrin receptor at the plasma membrane. Alternatively, may function as a negative regulator of the amino acid-induced TOR signaling by inhibiting the formation of active Rag GTPase complexes. Preferentially binds inactive Rag GTPase complexes and prevents their interaction with the mTORC1 complex inhibiting its relocalization to lysosomes and its activation. Thereby, may indirectly regulate cell growth, proliferation and autophagy. The protein is SH3 domain-binding protein 4-A (sh3bp4-a) of Xenopus laevis (African clawed frog).